The primary structure comprises 560 residues: Formate--tetrahydrofolate ligase (560 aa).

Residue 69 to 76 (TPAGEGKS) coordinates ATP.

The protein belongs to the formate--tetrahydrofolate ligase family.

It catalyses the reaction (6S)-5,6,7,8-tetrahydrofolate + formate + ATP = (6R)-10-formyltetrahydrofolate + ADP + phosphate. It functions in the pathway one-carbon metabolism; tetrahydrofolate interconversion. In Bacillus pumilus (strain SAFR-032), this protein is Formate--tetrahydrofolate ligase.